The primary structure comprises 876 residues: Leucine--tRNA ligase (876 aa).

The 'HIGH' region motif lies at 42-52; it reads PYPSGKLHMGH. Positions 634 to 638 match the 'KMSKS' region motif; the sequence is KMSKS. Residue Lys637 coordinates ATP.

The protein belongs to the class-I aminoacyl-tRNA synthetase family.

The protein localises to the cytoplasm. The enzyme catalyses tRNA(Leu) + L-leucine + ATP = L-leucyl-tRNA(Leu) + AMP + diphosphate. The polypeptide is Leucine--tRNA ligase (Neisseria gonorrhoeae (strain NCCP11945)).